Consider the following 383-residue polypeptide: Acetylornithine deacetylase (383 aa).

Residue His-80 coordinates Zn(2+). Residue Asp-82 is part of the active site. Asp-112 serves as a coordination point for Zn(2+). Glu-144 is an active-site residue. Zn(2+) contacts are provided by Glu-145, Glu-169, and His-355.

It belongs to the peptidase M20A family. ArgE subfamily. Homodimer. The cofactor is Zn(2+). It depends on Co(2+) as a cofactor. Glutathione is required as a cofactor.

Its subcellular location is the cytoplasm. It catalyses the reaction N(2)-acetyl-L-ornithine + H2O = L-ornithine + acetate. It functions in the pathway amino-acid biosynthesis; L-arginine biosynthesis; L-ornithine from N(2)-acetyl-L-ornithine (linear): step 1/1. Functionally, catalyzes the hydrolysis of the amide bond of N(2)-acetylated L-amino acids. Cleaves the acetyl group from N-acetyl-L-ornithine to form L-ornithine, an intermediate in L-arginine biosynthesis pathway, and a branchpoint in the synthesis of polyamines. The protein is Acetylornithine deacetylase of Escherichia coli O7:K1 (strain IAI39 / ExPEC).